The sequence spans 438 residues: MPTLEKTFELKQRGSTVRQEIIAGLTTFLAMVYSVIVVPNMLGAAGFPAESVFIATCLVAGLGSILIGLWANAPMAIGCAISLTAFTAFSLVIGQKVAIPVALGAVFLMGVVFTLISTTGIRAWILRNLPSNIAHGAGIGIGLFLLLIAANGVGLVVSNQAGLPVKLGDFTSFPVMMSLIGLALIIGLEKMKIKGGILWVIIAITIVGLIFDPNVKFGGEIFKMPTFGENSLFLQLDFMGALQPAILPVVFALVMTAVFDATGTIRAVAGQADLLDKDGQIINGGKALTSDSISSLFSGLFGTAPAAVYIESAAGTAAGGKTGITAIVVGVLFLLMLFFQPLAFLVPGYATAPALMYVGLLMLSNVSKLDFDDFVGAMSGLICAVFIVLTANIVTGIMLGFAALVIGRIVSGDIKRLNVGTVIIAIVLVAFYAGGWAI.

13 helical membrane-spanning segments follow: residues 21–41 (IIAG…VPNM), 51–71 (SVFI…GLWA), 73–93 (APMA…SLVI), 97–117 (VAIP…TLIS), 137–157 (AGIG…GLVV), 167–187 (LGDF…LIIG), 195–215 (GGIL…DPNV), 238–258 (FMGA…MTAV), 296–316 (LFSG…AAGT), 326–346 (AIVV…AFLV), 347–367 (PGYA…SNVS), 386–406 (FIVL…ALVI), and 418–438 (NVGT…GWAI). 315-322 (GTAAGGKT) is an ATP binding site.

This sequence belongs to the nucleobase:cation symporter-2 (NCS2) (TC 2.A.40) family. Azg-like subfamily.

Its subcellular location is the cell membrane. The chain is Putative permease HI_0125 from Haemophilus influenzae (strain ATCC 51907 / DSM 11121 / KW20 / Rd).